A 138-amino-acid polypeptide reads, in one-letter code: Basic phospholipase A2 PLA-N (138 aa).

The signal sequence occupies residues 1–16 (MRTLWIMAVLLVGVEG). Disulfide bonds link C42-C131, C44-C60, C59-C111, C65-C138, C66-C104, C73-C97, and C91-C102. Y43, G45, and G47 together coordinate Ca(2+). H63 is an active-site residue. D64 serves as a coordination point for Ca(2+). Residue D105 is part of the active site.

This sequence belongs to the phospholipase A2 family. Group II subfamily. D49 sub-subfamily. Requires Ca(2+) as cofactor. As to expression, expressed by the venom gland.

It is found in the secreted. The catalysed reaction is a 1,2-diacyl-sn-glycero-3-phosphocholine + H2O = a 1-acyl-sn-glycero-3-phosphocholine + a fatty acid + H(+). Snake venom phospholipase A2 (PLA2) that displays edema-inducing activities, as well as presynaptic neurotoxicity and myotoxicity. PLA2 catalyzes the calcium-dependent hydrolysis of the 2-acyl groups in 3-sn-phosphoglycerides. This Protobothrops flavoviridis (Habu) protein is Basic phospholipase A2 PLA-N.